The sequence spans 292 residues: Pantothenate synthetase (292 aa).

32 to 39 (MGFLHEGH) serves as a coordination point for ATP. Histidine 39 (proton donor) is an active-site residue. Glutamine 63 contacts (R)-pantoate. Glutamine 63 contributes to the beta-alanine binding site. Residue 150-153 (GEKD) coordinates ATP. Glutamine 156 is a (R)-pantoate binding site. Residues valine 179 and 187 to 190 (MSSR) contribute to the ATP site.

Belongs to the pantothenate synthetase family. In terms of assembly, homodimer.

The protein localises to the cytoplasm. The catalysed reaction is (R)-pantoate + beta-alanine + ATP = (R)-pantothenate + AMP + diphosphate + H(+). It participates in cofactor biosynthesis; (R)-pantothenate biosynthesis; (R)-pantothenate from (R)-pantoate and beta-alanine: step 1/1. Functionally, catalyzes the condensation of pantoate with beta-alanine in an ATP-dependent reaction via a pantoyl-adenylate intermediate. The chain is Pantothenate synthetase from Myxococcus xanthus (strain DK1622).